Reading from the N-terminus, the 161-residue chain is Heme transporter hrg-6 (161 aa).

4 consecutive transmembrane segments (helical) span residues 13 to 33 (IAYT…YIFA), 38 to 58 (VALA…YFYL), 75 to 95 (VLFW…ITAI), and 115 to 135 (WWST…NAFI).

Belongs to the HRG family.

The protein resides in the membrane. In terms of biological role, heme transporter. This Caenorhabditis elegans protein is Heme transporter hrg-6 (hrg-6).